Reading from the N-terminus, the 389-residue chain is Chalcone synthase 2 (389 aa).

Cysteine 164 is a catalytic residue.

It belongs to the thiolase-like superfamily. Chalcone/stilbene synthases family.

It catalyses the reaction (E)-4-coumaroyl-CoA + 3 malonyl-CoA + 3 H(+) = 2',4,4',6'-tetrahydroxychalcone + 3 CO2 + 4 CoA. Its pathway is secondary metabolite biosynthesis; flavonoid biosynthesis. Functionally, the primary product of this enzyme is 4,2',4',6'-tetrahydroxychalcone (also termed naringenin-chalcone or chalcone) which can under specific conditions spontaneously isomerize into naringenin. This Trifolium subterraneum (Subterranean clover) protein is Chalcone synthase 2 (CHS2).